The following is a 453-amino-acid chain: Chromosomal replication initiator protein DnaA (453 aa).

A domain I, interacts with DnaA modulators region spans residues 1-74 (MKEKQFWNRI…GFEIYDAEIT (74 aa)). Positions 74–113 (TPHYIFTKPQDTTSSQVEEATNLTLYNYSPKLVSIPYSDT) are domain II. The tract at residues 114–331 (GLKEKYTFDN…GAINDITLIA (218 aa)) is domain III, AAA+ region. Residues Gly158, Gly160, Lys161, and Thr162 each coordinate ATP. The domain IV, binds dsDNA stretch occupies residues 332–453 (RVKKIKDITI…EIESIKKKIK (122 aa)).

It belongs to the DnaA family. Oligomerizes as a right-handed, spiral filament on DNA at oriC.

The protein resides in the cytoplasm. Its function is as follows. Plays an essential role in the initiation and regulation of chromosomal replication. ATP-DnaA binds to the origin of replication (oriC) to initiate formation of the DNA replication initiation complex once per cell cycle. Binds the DnaA box (a 9 base pair repeat at the origin) and separates the double-stranded (ds)DNA. Forms a right-handed helical filament on oriC DNA; dsDNA binds to the exterior of the filament while single-stranded (ss)DNA is stabiized in the filament's interior. The ATP-DnaA-oriC complex binds and stabilizes one strand of the AT-rich DNA unwinding element (DUE), permitting loading of DNA polymerase. After initiation quickly degrades to an ADP-DnaA complex that is not apt for DNA replication. Binds acidic phospholipids. The protein is Chromosomal replication initiator protein DnaA of Streptococcus pneumoniae serotype 19F (strain G54).